The chain runs to 440 residues: Thymidine phosphorylase (440 aa).

The protein belongs to the thymidine/pyrimidine-nucleoside phosphorylase family. Homodimer.

It catalyses the reaction thymidine + phosphate = 2-deoxy-alpha-D-ribose 1-phosphate + thymine. Its pathway is pyrimidine metabolism; dTMP biosynthesis via salvage pathway; dTMP from thymine: step 1/2. Its function is as follows. The enzymes which catalyze the reversible phosphorolysis of pyrimidine nucleosides are involved in the degradation of these compounds and in their utilization as carbon and energy sources, or in the rescue of pyrimidine bases for nucleotide synthesis. This chain is Thymidine phosphorylase, found in Yersinia pseudotuberculosis serotype O:1b (strain IP 31758).